Here is a 119-residue protein sequence, read N- to C-terminus: Large ribosomal subunit protein uL18 (119 aa).

Belongs to the universal ribosomal protein uL18 family. As to quaternary structure, part of the 50S ribosomal subunit; part of the 5S rRNA/L5/L18/L25 subcomplex. Contacts the 5S and 23S rRNAs.

In terms of biological role, this is one of the proteins that bind and probably mediate the attachment of the 5S RNA into the large ribosomal subunit, where it forms part of the central protuberance. The polypeptide is Large ribosomal subunit protein uL18 (Tropheryma whipplei (strain TW08/27) (Whipple's bacillus)).